A 440-amino-acid polypeptide reads, in one-letter code: Thymidine phosphorylase (440 aa).

Belongs to the thymidine/pyrimidine-nucleoside phosphorylase family. In terms of assembly, homodimer.

It catalyses the reaction thymidine + phosphate = 2-deoxy-alpha-D-ribose 1-phosphate + thymine. Its pathway is pyrimidine metabolism; dTMP biosynthesis via salvage pathway; dTMP from thymine: step 1/2. Functionally, the enzymes which catalyze the reversible phosphorolysis of pyrimidine nucleosides are involved in the degradation of these compounds and in their utilization as carbon and energy sources, or in the rescue of pyrimidine bases for nucleotide synthesis. The polypeptide is Thymidine phosphorylase (Klebsiella pneumoniae subsp. pneumoniae (strain ATCC 700721 / MGH 78578)).